The primary structure comprises 195 residues: PRELI domain containing protein 3B (195 aa).

In terms of domain architecture, PRELI/MSF1 spans 1–172 (MKIWTSEHVF…VIHKLNAEIE (172 aa)). A phosphoserine mark is found at Ser46 and Ser51.

The protein belongs to the slowmo family.

This chain is PRELI domain containing protein 3B (Prelid3b), found in Mus musculus (Mouse).